We begin with the raw amino-acid sequence, 366 residues long: Holliday junction branch migration complex subunit RuvB (366 aa).

The interval 3–183 is large ATPase domain (RuvB-L); it reads ADGLVSAAAS…FGFTAHLDFY (181 aa). ATP is bound by residues Leu22, Arg23, Gly64, Lys67, Thr68, Ser69, 130-132, Arg173, Tyr183, and Arg220; that span reads EDF. Thr68 serves as a coordination point for Mg(2+). Positions 184 to 254 are small ATPAse domain (RuvB-S); sequence APDELARVLT…VARAALRIYD (71 aa). A head domain (RuvB-H) region spans residues 257-366; it reads GLGLDRLDRA…PEDGLHPGGG (110 aa). Positions 312 and 317 each coordinate DNA.

Belongs to the RuvB family. Homohexamer. Forms an RuvA(8)-RuvB(12)-Holliday junction (HJ) complex. HJ DNA is sandwiched between 2 RuvA tetramers; dsDNA enters through RuvA and exits via RuvB. An RuvB hexamer assembles on each DNA strand where it exits the tetramer. Each RuvB hexamer is contacted by two RuvA subunits (via domain III) on 2 adjacent RuvB subunits; this complex drives branch migration. In the full resolvosome a probable DNA-RuvA(4)-RuvB(12)-RuvC(2) complex forms which resolves the HJ.

The protein localises to the cytoplasm. The enzyme catalyses ATP + H2O = ADP + phosphate + H(+). The RuvA-RuvB-RuvC complex processes Holliday junction (HJ) DNA during genetic recombination and DNA repair, while the RuvA-RuvB complex plays an important role in the rescue of blocked DNA replication forks via replication fork reversal (RFR). RuvA specifically binds to HJ cruciform DNA, conferring on it an open structure. The RuvB hexamer acts as an ATP-dependent pump, pulling dsDNA into and through the RuvAB complex. RuvB forms 2 homohexamers on either side of HJ DNA bound by 1 or 2 RuvA tetramers; 4 subunits per hexamer contact DNA at a time. Coordinated motions by a converter formed by DNA-disengaged RuvB subunits stimulates ATP hydrolysis and nucleotide exchange. Immobilization of the converter enables RuvB to convert the ATP-contained energy into a lever motion, pulling 2 nucleotides of DNA out of the RuvA tetramer per ATP hydrolyzed, thus driving DNA branch migration. The RuvB motors rotate together with the DNA substrate, which together with the progressing nucleotide cycle form the mechanistic basis for DNA recombination by continuous HJ branch migration. Branch migration allows RuvC to scan DNA until it finds its consensus sequence, where it cleaves and resolves cruciform DNA. This Frankia alni (strain DSM 45986 / CECT 9034 / ACN14a) protein is Holliday junction branch migration complex subunit RuvB.